The chain runs to 640 residues: 1-deoxy-D-xylulose-5-phosphate synthase (640 aa).

Residues H75 and 117–119 (GHA) contribute to the thiamine diphosphate site. A Mg(2+)-binding site is contributed by D146. Residues 147 to 148 (AA), N175, and E370 contribute to the thiamine diphosphate site. Residue N175 coordinates Mg(2+).

Belongs to the transketolase family. DXPS subfamily. Homodimer. Requires Mg(2+) as cofactor. The cofactor is thiamine diphosphate.

The enzyme catalyses D-glyceraldehyde 3-phosphate + pyruvate + H(+) = 1-deoxy-D-xylulose 5-phosphate + CO2. It participates in metabolic intermediate biosynthesis; 1-deoxy-D-xylulose 5-phosphate biosynthesis; 1-deoxy-D-xylulose 5-phosphate from D-glyceraldehyde 3-phosphate and pyruvate: step 1/1. Catalyzes the acyloin condensation reaction between C atoms 2 and 3 of pyruvate and glyceraldehyde 3-phosphate to yield 1-deoxy-D-xylulose-5-phosphate (DXP). The protein is 1-deoxy-D-xylulose-5-phosphate synthase of Chlamydia trachomatis serovar A (strain ATCC VR-571B / DSM 19440 / HAR-13).